The primary structure comprises 107 residues: UPF0145 protein CKO_02237 (107 aa).

This sequence belongs to the UPF0145 family.

The sequence is that of UPF0145 protein CKO_02237 from Citrobacter koseri (strain ATCC BAA-895 / CDC 4225-83 / SGSC4696).